The following is a 393-amino-acid chain: Acetyl-CoA acetyltransferase (393 aa).

C90 acts as the Acyl-thioester intermediate in catalysis. Catalysis depends on proton acceptor residues H349 and C379.

This sequence belongs to the thiolase-like superfamily. Thiolase family. Homotetramer.

It localises to the cytoplasm. The enzyme catalyses 2 acetyl-CoA = acetoacetyl-CoA + CoA. Its pathway is biopolymer metabolism; poly-(R)-3-hydroxybutanoate biosynthesis. It participates in metabolic intermediate biosynthesis; (R)-mevalonate biosynthesis; (R)-mevalonate from acetyl-CoA: step 1/3. The polypeptide is Acetyl-CoA acetyltransferase (Rhizobium meliloti (strain 1021) (Ensifer meliloti)).